The sequence spans 312 residues: Zinc transporter ZitB (312 aa).

The next 6 membrane-spanning stretches (helical) occupy residues 16 to 36 (LLIA…GGWL), 40 to 60 (LALL…FIAL), 81 to 101 (LTTL…ILIV), 117 to 137 (TPML…FWIL), 153 to 173 (LHVL…IVIL), and 177 to 197 (WTPI…RNAW).

Belongs to the cation diffusion facilitator (CDF) transporter (TC 2.A.4) family. SLC30A subfamily.

It is found in the cell inner membrane. Involved in zinc efflux across the cytoplasmic membrane, thus reducing zinc accumulation in the cytoplasm and rendering bacteria more resistant to zinc. It may contribute to zinc homeostasis at low concentrations of zinc. This chain is Zinc transporter ZitB, found in Yersinia pseudotuberculosis serotype I (strain IP32953).